We begin with the raw amino-acid sequence, 122 residues long: Ribonuclease P protein component (122 aa).

It belongs to the RnpA family. In terms of assembly, consists of a catalytic RNA component (M1 or rnpB) and a protein subunit.

It carries out the reaction Endonucleolytic cleavage of RNA, removing 5'-extranucleotides from tRNA precursor.. Functionally, RNaseP catalyzes the removal of the 5'-leader sequence from pre-tRNA to produce the mature 5'-terminus. It can also cleave other RNA substrates such as 4.5S RNA. The protein component plays an auxiliary but essential role in vivo by binding to the 5'-leader sequence and broadening the substrate specificity of the ribozyme. This is Ribonuclease P protein component from Roseiflexus sp. (strain RS-1).